The chain runs to 265 residues: Lipopolysaccharide core heptose(I) kinase WaaP (265 aa).

Residue aspartate 162 is part of the active site.

Belongs to the protein kinase superfamily. KdkA/RfaP family. Mg(2+) serves as cofactor.

The protein resides in the cell inner membrane. The catalysed reaction is an L-alpha-D-Hep-(1-&gt;3)-L-alpha-D-Hep-(1-&gt;5)-[alpha-Kdo-(2-&gt;4)]-alpha-Kdo-(2-&gt;6)-lipid A + ATP = an L-alpha-D-Hep-(1-&gt;3)-4-O-phospho-L-alpha-D-Hep-(1-&gt;5)-[alpha-Kdo-(2-&gt;4)]-alpha-Kdo-(2-&gt;6)-lipid A + ADP + H(+). The enzyme catalyses L-alpha-D-Hep-(1-&gt;3)-L-alpha-D-Hep-(1-&gt;5)-[alpha-Kdo-(2-&gt;4)]-alpha-Kdo-(2-&gt;6)-lipid A (E. coli) + ATP = L-alpha-D-Hep-(1-&gt;3)-4-O-phospho-L-alpha-D-Hep-(1-&gt;5)-[alpha-Kdo-(2-&gt;4)]-alpha-Kdo-(2-&gt;6)-lipid A (E. coli) + ADP + H(+). Its pathway is bacterial outer membrane biogenesis; LPS core biosynthesis. Its function is as follows. Kinase involved in the biosynthesis of the core oligosaccharide region of lipopolysaccharide (LPS). Catalyzes the phosphorylation of heptose I (HepI), the first heptose added to the Kdo2-lipid A module. The polypeptide is Lipopolysaccharide core heptose(I) kinase WaaP (Escherichia coli).